Here is a 390-residue protein sequence, read N- to C-terminus: Prostaglandin E2 receptor EP3 subtype (390 aa).

The Extracellular segment spans residues 1–53; it reads MKETRGYGGDAPFCTRLNHSYTGMWAPERSAEARGNLTRPPGSGEDCGSVSVA. N-linked (GlcNAc...) asparagine glycans are attached at residues N18 and N36. The helical transmembrane segment at 54-78 threads the bilayer; that stretch reads FPITMLLTGFVGNALAMLLVSRSYR. Over 79–91 the chain is Cytoplasmic; that stretch reads RRESKRKKSFLLC. A helical membrane pass occupies residues 92–112; that stretch reads IGWLALTDLVGQLLTTPVVIV. Topologically, residues 113 to 131 are extracellular; sequence VYLSKQRWEHIDPSGRLCT. Residues 132–153 form a helical membrane-spanning segment; sequence FFGLTMTVFGLSSLFIASAMAV. At 154 to 175 the chain is on the cytoplasmic side; that stretch reads ERALAIRAPHWYASHMKTRATR. Residues 176–197 form a helical membrane-spanning segment; it reads AVLLGVWLAVLAFALLPVLGVG. Topologically, residues 198–227 are extracellular; the sequence is QYTVQWPGTWCFISTGRGGNGTSSSHNWGN. The helical transmembrane segment at 228-253 threads the bilayer; that stretch reads LFFASAFAFLGLLALTVTFSCNLATI. The Cytoplasmic segment spans residues 254 to 283; that stretch reads KALVSRCRAKATASQSSAQWGRITTETAIQ. The chain crosses the membrane as a helical span at residues 284–307; that stretch reads LMGIMCVLSVCWSPLLIMMLKMIF. Residues 308-327 lie on the Extracellular side of the membrane; sequence NQTSVEHCKTHTEKQKECNF. A helical membrane pass occupies residues 328-349; it reads FLIAVRLASLNQILDPWVYLLL. Topologically, residues 350-390 are cytoplasmic; it reads RKILLRKFCQIRYHTNNYASSSTSLPCQCSSTLMWSDHLER.

This sequence belongs to the G-protein coupled receptor 1 family. In terms of assembly, interacts (via C-terminus) with MKLN1. Detected in kidney. Expressed in small intestine, heart, pancreas, gastric fundic mucosa, mammary artery and pulmonary vessels.

It localises to the cell membrane. Functionally, receptor for prostaglandin E2 (PGE2). The activity of this receptor can couple to both the inhibition of adenylate cyclase mediated by G(i) proteins, and to an elevation of intracellular calcium. Required for normal development of fever in response to pyrinogens, including IL1B, prostaglandin E2 and bacterial lipopolysaccharide (LPS). Required for normal potentiation of platelet aggregation by prostaglandin E2, and thus plays a role in the regulation of blood coagulation. Required for increased HCO3(-) secretion in the duodenum in response to mucosal acidification, and thereby contributes to the protection of the mucosa against acid-induced ulceration. Not required for normal kidney function, normal urine volume and osmolality. The protein is Prostaglandin E2 receptor EP3 subtype (PTGER3) of Homo sapiens (Human).